The primary structure comprises 94 residues: U27-theraphotoxin-Cg1a (94 aa).

Residues 1 to 22 (MIFLLPPVIFVMLLAESVLILG) form the signal peptide. Residues 23–58 (DSEDADLMEMVQMSRPFFNPIIPAVEFVDLREERQR) constitute a propeptide that is removed on maturation. 3 cysteine pairs are disulfide-bonded: C60–C78, C67–C83, and C77–C88.

It belongs to the neurotoxin 14 (magi-1) family. OAIP-1 subfamily. Expressed by the venom gland.

Its subcellular location is the secreted. Probable ion channel inhibitor. This Chilobrachys guangxiensis (Chinese earth tiger tarantula) protein is U27-theraphotoxin-Cg1a.